Here is a 363-residue protein sequence, read N- to C-terminus: Ankyrin repeat domain-containing protein 40 (363 aa).

M1 bears the N-acetylmethionine mark. ANK repeat units lie at residues E9–S38 and N43–I72. The tract at residues D135–L167 is disordered. The segment covering P144–E164 has biased composition (pro residues). The residue at position 176 (S176) is a Phosphoserine.

In Mus musculus (Mouse), this protein is Ankyrin repeat domain-containing protein 40 (Ankrd40).